The primary structure comprises 187 residues: NADH-quinone oxidoreductase subunit B (187 aa).

Cys-46, Cys-47, Cys-112, and Cys-141 together coordinate [4Fe-4S] cluster.

This sequence belongs to the complex I 20 kDa subunit family. NDH-1 is composed of 14 different subunits. Subunits NuoB, C, D, E, F, and G constitute the peripheral sector of the complex. [4Fe-4S] cluster is required as a cofactor.

It localises to the cell inner membrane. The catalysed reaction is a quinone + NADH + 5 H(+)(in) = a quinol + NAD(+) + 4 H(+)(out). NDH-1 shuttles electrons from NADH, via FMN and iron-sulfur (Fe-S) centers, to quinones in the respiratory chain. The immediate electron acceptor for the enzyme in this species is believed to be ubiquinone. Couples the redox reaction to proton translocation (for every two electrons transferred, four hydrogen ions are translocated across the cytoplasmic membrane), and thus conserves the redox energy in a proton gradient. In Myxococcus xanthus (strain DK1622), this protein is NADH-quinone oxidoreductase subunit B.